Consider the following 305-residue polypeptide: Zinc transporter ZIP9 (305 aa).

A helical membrane pass occupies residues 7–27; that stretch reads ICLLSLAMLVACYVAGIIPLA. N-linked (GlcNAc...) asparagine glycosylation is present at N29. 5 helical membrane-spanning segments follow: residues 35–55, 104–124, 144–164, 174–194, and 208–228; these read LKLV…AVIV, AYIG…DQIG, ITTT…LGAA, LIVF…LVSF, and HLLV…LGLS. N-linked (GlcNAc...) asparagine glycosylation is present at N239. 2 helical membrane passes run 242–262 and 284–304; these read GVAM…HVLP and LEVA…IGHH.

This sequence belongs to the ZIP transporter (TC 2.A.5) family.

Its subcellular location is the golgi apparatus. The protein resides in the trans-Golgi network membrane. It localises to the cell membrane. It is found in the cytoplasm. The protein localises to the perinuclear region. Its subcellular location is the mitochondrion. The protein resides in the nucleus. It carries out the reaction Zn(2+)(in) = Zn(2+)(out). In terms of biological role, transports zinc ions across cell and organelle membranes into the cytoplasm and regulates intracellular zinc homeostasis. Participates in the zinc ions efflux out of the secretory compartments. Regulates intracellular zinc level, resulting in the enhancement of AKT1 and MAPK3/MAPK1 (Erk1/2) phosphorylation in response to the BCR activation. Also functions as a membrane androgen receptor that mediates, through a G protein, the non-classical androgen signaling pathway, characterized by the activation of MAPK3/MAPK1 (Erk1/2) and transcription factors CREB1 or ATF1. Moreover, has dual functions as a membrane-bound androgen receptor and as an androgen-dependent zinc transporter both of which are mediated through an inhibitory G protein (Gi) that mediates both MAP kinase and zinc signaling leading to the androgen-dependent apoptotic process. This Gallus gallus (Chicken) protein is Zinc transporter ZIP9.